The following is a 323-amino-acid chain: Homoserine kinase (323 aa).

An ATP-binding site is contributed by 97-107 (PHGRGMGSSGA).

The protein belongs to the GHMP kinase family. Homoserine kinase subfamily.

It localises to the cytoplasm. It carries out the reaction L-homoserine + ATP = O-phospho-L-homoserine + ADP + H(+). The protein operates within amino-acid biosynthesis; L-threonine biosynthesis; L-threonine from L-aspartate: step 4/5. Its function is as follows. Catalyzes the ATP-dependent phosphorylation of L-homoserine to L-homoserine phosphate. The polypeptide is Homoserine kinase (Leifsonia xyli subsp. xyli (strain CTCB07)).